Consider the following 545-residue polypeptide: MTTNYIFVTGGVVSSLGKGIAAASLAAILEARGLNVTIMKLDPYINVDPGTMSPIQHGEVFVTEDGAETDLDLGHYERFIRTKMSRRNNFTTGRIYSDVLRKERRGDYLGATVQVIPHITNAIKERVLEGGEGHDVVLVEIGGTVGDIESLPFLEAIRQMAVEIGREHTLFMHLTLVPYMAASGEVKTKPTQHSVKELLSIGIQPDILICRSDRAVPANERAKIALFCNVPEKAVISLKDVDSIYKIPGLLKSQGLDDYICKRFSLNCPEANLSEWEQVIFEEANPVSEVTIGMVGKYIELPDAYKSVIEALKHGGLKNRVSVNIKLIDSQDVETRGVEILKGLDAILVPGGFGYRGVEGMITTARFARENNIPYLGICLGMQVALIDYARHVANMENANSTEFVPDCKYPVVALITEWRDENGNVEVRSEKSDLGGTMRLGAQQCQLVDDSLVRQLYNAPTIVERHRHRYEVNNMLLKQIEDAGLRVAGRSGDDQLVEIIEVPNHPWFVACQFHPEFTSTPRDGHPLFAGFVKAASEFQKRQAK.

The interval 1–266 is amidoligase domain; the sequence is MTTNYIFVTG…DDYICKRFSL (266 aa). Serine 14 contributes to the CTP binding site. UTP is bound at residue serine 14. ATP-binding positions include 15–20 and aspartate 72; that span reads SLGKGI. Positions 72 and 140 each coordinate Mg(2+). Residues 147–149, 187–192, and lysine 223 contribute to the CTP site; these read DIE and KTKPTQ. UTP contacts are provided by residues 187–192 and lysine 223; that span reads KTKPTQ. 239–241 lines the ATP pocket; it reads KDV. In terms of domain architecture, Glutamine amidotransferase type-1 spans 291-542; the sequence is TIGMVGKYIE…VKAASEFQKR (252 aa). Position 352 (glycine 352) interacts with L-glutamine. Cysteine 379 acts as the Nucleophile; for glutamine hydrolysis in catalysis. L-glutamine-binding positions include 380 to 383, glutamate 403, and arginine 470; that span reads LGMQ. Active-site residues include histidine 515 and glutamate 517.

Belongs to the CTP synthase family. In terms of assembly, homotetramer.

It carries out the reaction UTP + L-glutamine + ATP + H2O = CTP + L-glutamate + ADP + phosphate + 2 H(+). The catalysed reaction is L-glutamine + H2O = L-glutamate + NH4(+). The enzyme catalyses UTP + NH4(+) + ATP = CTP + ADP + phosphate + 2 H(+). It functions in the pathway pyrimidine metabolism; CTP biosynthesis via de novo pathway; CTP from UDP: step 2/2. Allosterically activated by GTP, when glutamine is the substrate; GTP has no effect on the reaction when ammonia is the substrate. The allosteric effector GTP functions by stabilizing the protein conformation that binds the tetrahedral intermediate(s) formed during glutamine hydrolysis. Inhibited by the product CTP, via allosteric rather than competitive inhibition. Functionally, catalyzes the ATP-dependent amination of UTP to CTP with either L-glutamine or ammonia as the source of nitrogen. Regulates intracellular CTP levels through interactions with the four ribonucleotide triphosphates. The polypeptide is CTP synthase (Shigella boydii serotype 18 (strain CDC 3083-94 / BS512)).